Consider the following 253-residue polypeptide: Purine nucleoside phosphorylase DR_1966 (253 aa).

3 residues coordinate Zn(2+): His72, Cys106, and His123.

It belongs to the purine nucleoside phosphorylase YfiH/LACC1 family. As to quaternary structure, homodimer. The cofactor is Cu(2+). It depends on Zn(2+) as a cofactor.

The catalysed reaction is adenosine + phosphate = alpha-D-ribose 1-phosphate + adenine. It catalyses the reaction S-methyl-5'-thioadenosine + phosphate = 5-(methylsulfanyl)-alpha-D-ribose 1-phosphate + adenine. It carries out the reaction inosine + phosphate = alpha-D-ribose 1-phosphate + hypoxanthine. The enzyme catalyses adenosine + H2O + H(+) = inosine + NH4(+). Purine nucleoside enzyme that catalyzes the phosphorolysis of adenosine and inosine nucleosides, yielding D-ribose 1-phosphate and the respective free bases, adenine and hypoxanthine. Also catalyzes the phosphorolysis of S-methyl-5'-thioadenosine into adenine and S-methyl-5-thio-alpha-D-ribose 1-phosphate. Also has adenosine deaminase activity. The protein is Purine nucleoside phosphorylase DR_1966 of Deinococcus radiodurans (strain ATCC 13939 / DSM 20539 / JCM 16871 / CCUG 27074 / LMG 4051 / NBRC 15346 / NCIMB 9279 / VKM B-1422 / R1).